A 64-amino-acid chain; its full sequence is Small ribosomal subunit protein eS17 (64 aa).

Belongs to the eukaryotic ribosomal protein eS17 family.

In Methanocorpusculum labreanum (strain ATCC 43576 / DSM 4855 / Z), this protein is Small ribosomal subunit protein eS17.